Consider the following 683-residue polypeptide: Leucine-rich repeat and calponin homology domain-containing protein 4 (683 aa).

The span at 1–18 (MAAAVAAPLAAGGEEAAA) shows a compositional bias: low complexity. The interval 1–34 (MAAAVAAPLAAGGEEAAATTSVPGSPGLPGRRSA) is disordered. 9 LRR repeats span residues 41–64 (AVAT…AARS), 67–90 (LSDI…ACQL), 92–113 (SLEG…LGNL), 114–136 (TALT…ICQL), 138–158 (LRVL…IGTL), 159–181 (GSLR…LCGL), 182–204 (SSLR…LGDL), 206–226 (LVRL…FCRL), and 227–250 (RHLQ…CLKG). A disordered region spans residues 268–292 (ALGDLAPSRPPSFSPCPAEDLFPGH). A phosphoserine mark is found at serine 279, serine 281, serine 304, serine 307, serine 309, and serine 313. Disordered stretches follow at residues 326–436 (FRIS…LLKP) and 449–539 (STQA…DEKD). Basic and acidic residues-rich tracts occupy residues 330 to 345 (ELAR…KEDG), 357 to 376 (IDSH…EQRP), and 384 to 418 (GDRE…ERRQ). 2 positions are modified to phosphoserine: serine 432 and serine 457. Over residues 449–460 (STQAMHNGSPKS) the composition is skewed to polar residues. 2 stretches are compositionally biased toward low complexity: residues 461-481 (SASQ…PASQ) and 511-524 (SSSQ…SPDS). A phosphoserine mark is found at serine 511, serine 513, serine 517, serine 521, and serine 589. In terms of domain architecture, Calponin-homology (CH) spans 534-647 (VPDEKDLMTQ…ALEAVKRVGG (114 aa)). Residues 653 to 673 (LWPPSGLGGFVVFYVVLMLLL) form a helical membrane-spanning segment.

It localises to the cell membrane. In terms of biological role, accessory protein that regulates signaling by multiple TLRs, acting as a broad-spanning regulator of the innate immune response. In macrophages, binds LPS and promotes proper docking of LPS in lipid raft membrane. May be required for lipid raft maintenance. In Homo sapiens (Human), this protein is Leucine-rich repeat and calponin homology domain-containing protein 4.